Consider the following 672-residue polypeptide: Spermatid perinuclear RNA-binding protein (672 aa).

The region spanning 5–363 is the DZF domain; sequence RSFANDDRHV…ALKRPFEDGL (359 aa). 2 disordered regions span residues 52–73 and 349–371; these read TNKG…GENY and GAGS…DPNK. Over residues 357 to 371 the composition is skewed to basic and acidic residues; the sequence is RPFEDGLGDDKDPNK. Positions 387-453 constitute a DRBM 1 domain; that stretch reads DLMNALMRLN…AVKVLQAMGY (67 aa). Positions 466 to 476 are enriched in basic and acidic residues; it reads SDEKSDNESKN. Positions 466–499 are disordered; it reads SDEKSDNESKNETVSSNSSNNTGNSTTETSSTLE. A compositionally biased stretch (low complexity) spans 477-497; sequence ETVSSNSSNNTGNSTTETSST. The region spanning 510–576 is the DRBM 2 domain; the sequence is SGKNPVMELN…ALAALEKLFS (67 aa). An asymmetric dimethylarginine mark is found at Arg612 and Arg617.

Interacts with EIF2AK2. Associates with microtubules; it is unsure whether such interaction is direct or indirect.

The protein localises to the cytoplasm. In terms of biological role, involved in spermatogenesis and sperm function. Plays a role in regulation of cell growth. Binds to double-stranded DNA and RNA. Binds most efficiently to poly(I:C) RNA than to poly(dI:dC) DNA. Binds also to single-stranded poly(G) RNA. Binds non-specifically to the mRNA PRM1 3'-UTR and adenovirus VA RNA. In Pongo abelii (Sumatran orangutan), this protein is Spermatid perinuclear RNA-binding protein (STRBP).